A 376-amino-acid polypeptide reads, in one-letter code: Alanine racemase (376 aa).

Catalysis depends on K40, which acts as the Proton acceptor; specific for D-alanine. K40 is modified (N6-(pyridoxal phosphate)lysine). Residue R138 coordinates substrate. Residue Y270 is the Proton acceptor; specific for L-alanine of the active site. Substrate is bound at residue M317.

The protein belongs to the alanine racemase family. The cofactor is pyridoxal 5'-phosphate.

The catalysed reaction is L-alanine = D-alanine. It participates in amino-acid biosynthesis; D-alanine biosynthesis; D-alanine from L-alanine: step 1/1. Functionally, catalyzes the interconversion of L-alanine and D-alanine. May also act on other amino acids. The chain is Alanine racemase (alr) from Lactobacillus acidophilus (strain ATCC 700396 / NCK56 / N2 / NCFM).